The primary structure comprises 52 residues: Phospholamban (52 aa).

Residue methionine 1 is modified to N-acetylmethionine. Residues 1 to 31 are Cytoplasmic-facing; that stretch reads MDKVQYLTRSAIRRASTIEMPQQARQNLQNL. Serine 16 carries the post-translational modification Phosphoserine; by PKA and DMPK. Threonine 17 is modified (phosphothreonine; by CaMK2). The chain crosses the membrane as a helical span at residues 32–52; the sequence is FINFCLILICLLLICIIVMLL. A lipid anchor (S-palmitoyl cysteine) is attached at cysteine 36.

It belongs to the phospholamban family. As to quaternary structure, homopentamer. Can also form heterooligomers with other sarcoplasmic/endoplasmic reticulum calcium ATPase (SERCA) regulators ARLN, ERLN, SLN and STRIT1/DWORF. Monomer. Interacts with HAX1. Interacts as a monomer with ATP2A2; the interaction decreases ATP2A2 Ca(2+) affinity. Interacts with VMP1; VMP1 competes with PLN and SLN to prevent them from forming an inhibitory complex with ATP2A2. Interacts with S100A1 in a Ca(2+)-dependent manner. Phosphorylation by DMPK may stimulate sarcoplasmic reticulum calcium uptake in cardiomyocytes. Phosphorylation by PKA abolishes the inhibition of ATP2A2-mediated calcium uptake. Phosphorylated at Thr-17 by CaMK2, and in response to beta-adrenergic stimulation. Post-translationally, palmitoylated by ZDHHC16, promoting formation of the homopentamer. In terms of processing, in elongated spermatids, proteolytically cleaved by SPPL2C which modulates intracellular Ca(2+) homeostasis. As to expression, heart.

Its subcellular location is the endoplasmic reticulum membrane. It is found in the sarcoplasmic reticulum membrane. It localises to the mitochondrion membrane. The protein resides in the membrane. Reversibly inhibits the activity of ATP2A2/SERCA2 in cardiac sarcoplasmic reticulum by decreasing the apparent affinity of the ATPase for Ca(2+). Binds preferentially to the ATP-bound E1 conformational form of ATP2A2 which predominates at low Ca(2+) concentrations during the diastolic phase of the cardiac cycle. Inhibits ATP2A2 Ca(2+) affinity by disrupting its allosteric activation by ATP. Modulates the contractility of the heart muscle in response to physiological stimuli via its effects on ATP2A2. Modulates calcium re-uptake during muscle relaxation and plays an important role in calcium homeostasis in the heart muscle. The degree of ATP2A2 inhibition depends on the oligomeric state of PLN. ATP2A2 inhibition is alleviated by PLN phosphorylation. Also inhibits the activity of ATP2A3/SERCA3. Controls intracellular Ca(2+) levels in elongated spermatids and may play a role in germ cell differentiation. In the thalamic reticular nucleus of the brain, plays a role in the regulation of sleep patterns and executive functioning. The polypeptide is Phospholamban (Canis lupus familiaris (Dog)).